Consider the following 64-residue polypeptide: Large ribosomal subunit protein bL35 (64 aa).

Basic residues predominate over residues 1 to 14 (MKQKTHKGAAKRIK). The tract at residues 1 to 50 (MKQKTHKGAAKRIKISGSGKLRREQANRRHLLEGKPSKRTRRLKGTEDVA) is disordered. Residues 21-36 (LRREQANRRHLLEGKP) show a composition bias toward basic and acidic residues.

This sequence belongs to the bacterial ribosomal protein bL35 family.

The protein is Large ribosomal subunit protein bL35 of Corynebacterium jeikeium (strain K411).